We begin with the raw amino-acid sequence, 892 residues long: DNA ligase (892 aa).

The interval 1 to 23 (MTMTNRDDSEQLAWDFDAPESDG) is disordered. Residues 99–103 (DAAYD), 148–149 (SL), and Glu182 contribute to the NAD(+) site. Lys184 functions as the N6-AMP-lysine intermediate in the catalytic mechanism. NAD(+) is bound by residues Arg205, Glu244, Lys369, and Lys393. Residues Cys490, Cys493, Cys509, and Cys515 each contribute to the Zn(2+) site. Residues 810–892 (GLPQTLAGKT…KQLLDTGTVE (83 aa)) form the BRCT domain.

Belongs to the NAD-dependent DNA ligase family. LigA subfamily. It depends on Mg(2+) as a cofactor. Requires Mn(2+) as cofactor.

The catalysed reaction is NAD(+) + (deoxyribonucleotide)n-3'-hydroxyl + 5'-phospho-(deoxyribonucleotide)m = (deoxyribonucleotide)n+m + AMP + beta-nicotinamide D-nucleotide.. In terms of biological role, DNA ligase that catalyzes the formation of phosphodiester linkages between 5'-phosphoryl and 3'-hydroxyl groups in double-stranded DNA using NAD as a coenzyme and as the energy source for the reaction. It is essential for DNA replication and repair of damaged DNA. The sequence is that of DNA ligase from Bifidobacterium adolescentis (strain ATCC 15703 / DSM 20083 / NCTC 11814 / E194a).